The sequence spans 453 residues: Probable tRNA methyltransferase 9B (453 aa).

S214 carries the post-translational modification Phosphoserine.

Belongs to the methyltransferase superfamily.

In terms of biological role, may modify wobble uridines in specific arginine and glutamic acid tRNAs. Acts as a tumor suppressor by promoting the expression of LIN9. This is Probable tRNA methyltransferase 9B (TRMT9B) from Bos taurus (Bovine).